Consider the following 308-residue polypeptide: Mycothiol acetyltransferase (308 aa).

A 1D-myo-inositol 2-(L-cysteinylamino)-2-deoxy-alpha-D-glucopyranoside-binding site is contributed by Glu44. 83 to 85 (AVV) contacts acetyl-CoA. In terms of domain architecture, N-acetyltransferase spans 161–308 (VRLRTYAGSA…DVAYGRPEGD (148 aa)). The 1D-myo-inositol 2-(L-cysteinylamino)-2-deoxy-alpha-D-glucopyranoside site is built by Glu188, Lys230, and Glu238. Residues 242–244 (VGV) and 249–255 (QGRGLGR) each bind acetyl-CoA. A 1D-myo-inositol 2-(L-cysteinylamino)-2-deoxy-alpha-D-glucopyranoside-binding site is contributed by Tyr276. Acetyl-CoA is bound at residue 281 to 286 (NTAALH).

It belongs to the acetyltransferase family. MshD subfamily. As to quaternary structure, monomer.

It carries out the reaction 1D-myo-inositol 2-(L-cysteinylamino)-2-deoxy-alpha-D-glucopyranoside + acetyl-CoA = mycothiol + CoA + H(+). In terms of biological role, catalyzes the transfer of acetyl from acetyl-CoA to desacetylmycothiol (Cys-GlcN-Ins) to form mycothiol. The chain is Mycothiol acetyltransferase from Gordonia bronchialis (strain ATCC 25592 / DSM 43247 / BCRC 13721 / JCM 3198 / KCTC 3076 / NBRC 16047 / NCTC 10667) (Rhodococcus bronchialis).